The chain runs to 423 residues: Glutamyl-tRNA(Gln) amidotransferase subunit A (423 aa).

Residues Met1–Leu20 form a disordered region. Residues Glu10–Pro19 are compositionally biased toward acidic residues. Catalysis depends on charge relay system residues Lys28 and Ser103. The segment at Glu75 to Ala108 is disordered. Ser127 serves as the catalytic Acyl-ester intermediate. The disordered stretch occupies residues Asp183–Asp206.

The protein belongs to the amidase family. GatA subfamily. As to quaternary structure, heterotrimer of A, B and C subunits.

The enzyme catalyses L-glutamyl-tRNA(Gln) + L-glutamine + ATP + H2O = L-glutaminyl-tRNA(Gln) + L-glutamate + ADP + phosphate + H(+). In terms of biological role, allows the formation of correctly charged Gln-tRNA(Gln) through the transamidation of misacylated Glu-tRNA(Gln) in organisms which lack glutaminyl-tRNA synthetase. The reaction takes place in the presence of glutamine and ATP through an activated gamma-phospho-Glu-tRNA(Gln). The sequence is that of Glutamyl-tRNA(Gln) amidotransferase subunit A from Natronomonas pharaonis (strain ATCC 35678 / DSM 2160 / CIP 103997 / JCM 8858 / NBRC 14720 / NCIMB 2260 / Gabara) (Halobacterium pharaonis).